Reading from the N-terminus, the 286-residue chain is NADPH-dependent 7-cyano-7-deazaguanine reductase (286 aa).

92-94 (IES) contacts substrate. Residue 94–95 (SK) coordinates NADPH. Cys-194 (thioimide intermediate) is an active-site residue. Residue Asp-201 is the Proton donor of the active site. 233–234 (HE) serves as a coordination point for substrate. 262–263 (RG) contacts NADPH.

It belongs to the GTP cyclohydrolase I family. QueF type 2 subfamily. In terms of assembly, homodimer.

It localises to the cytoplasm. It catalyses the reaction 7-aminomethyl-7-carbaguanine + 2 NADP(+) = 7-cyano-7-deazaguanine + 2 NADPH + 3 H(+). It participates in tRNA modification; tRNA-queuosine biosynthesis. In terms of biological role, catalyzes the NADPH-dependent reduction of 7-cyano-7-deazaguanine (preQ0) to 7-aminomethyl-7-deazaguanine (preQ1). The polypeptide is NADPH-dependent 7-cyano-7-deazaguanine reductase (Shewanella oneidensis (strain ATCC 700550 / JCM 31522 / CIP 106686 / LMG 19005 / NCIMB 14063 / MR-1)).